The chain runs to 104 residues: Large ribosomal subunit protein uL24 (104 aa).

It belongs to the universal ribosomal protein uL24 family. As to quaternary structure, part of the 50S ribosomal subunit.

Functionally, one of two assembly initiator proteins, it binds directly to the 5'-end of the 23S rRNA, where it nucleates assembly of the 50S subunit. Its function is as follows. One of the proteins that surrounds the polypeptide exit tunnel on the outside of the subunit. This Pseudomonas fluorescens (strain SBW25) protein is Large ribosomal subunit protein uL24.